The following is a 319-amino-acid chain: 2-dehydropantoate 2-reductase (319 aa).

NADP(+)-binding positions include 10–15 (GTGALG) and Asn-105. Asn-105 is a binding site for substrate. Residue Lys-192 is the Proton donor of the active site. Substrate is bound by residues Asn-196, Asn-200, and Ser-262. Position 274 (Glu-274) interacts with NADP(+).

The protein belongs to the ketopantoate reductase family.

It localises to the cytoplasm. The catalysed reaction is (R)-pantoate + NADP(+) = 2-dehydropantoate + NADPH + H(+). It participates in cofactor biosynthesis; (R)-pantothenate biosynthesis; (R)-pantoate from 3-methyl-2-oxobutanoate: step 2/2. Its function is as follows. Catalyzes the NADPH-dependent reduction of ketopantoate into pantoic acid. The sequence is that of 2-dehydropantoate 2-reductase from Nostoc sp. (strain PCC 7120 / SAG 25.82 / UTEX 2576).